Reading from the N-terminus, the 311-residue chain is Pyrimidine-specific ribonucleoside hydrolase RihA (311 aa).

Residue histidine 240 is part of the active site.

It belongs to the IUNH family. RihA subfamily.

Functionally, hydrolyzes with equal efficiency cytidine or uridine to ribose and cytosine or uracil, respectively. This chain is Pyrimidine-specific ribonucleoside hydrolase RihA, found in Escherichia coli O81 (strain ED1a).